The chain runs to 197 residues: Pyridoxal 5'-phosphate synthase subunit PdxT (197 aa).

Residue 53–55 (GES) participates in L-glutamine binding. C85 serves as the catalytic Nucleophile. Residues R114 and 142–143 (IR) each bind L-glutamine. Residues H179 and E181 each act as charge relay system in the active site.

It belongs to the glutaminase PdxT/SNO family. In terms of assembly, in the presence of PdxS, forms a dodecamer of heterodimers. Only shows activity in the heterodimer.

The catalysed reaction is aldehydo-D-ribose 5-phosphate + D-glyceraldehyde 3-phosphate + L-glutamine = pyridoxal 5'-phosphate + L-glutamate + phosphate + 3 H2O + H(+). The enzyme catalyses L-glutamine + H2O = L-glutamate + NH4(+). It functions in the pathway cofactor biosynthesis; pyridoxal 5'-phosphate biosynthesis. In terms of biological role, catalyzes the hydrolysis of glutamine to glutamate and ammonia as part of the biosynthesis of pyridoxal 5'-phosphate. The resulting ammonia molecule is channeled to the active site of PdxS. The chain is Pyridoxal 5'-phosphate synthase subunit PdxT from Thermococcus gammatolerans (strain DSM 15229 / JCM 11827 / EJ3).